A 514-amino-acid polypeptide reads, in one-letter code: Maturase K (514 aa).

This sequence belongs to the intron maturase 2 family. MatK subfamily.

Its subcellular location is the plastid. The protein localises to the chloroplast. In terms of biological role, usually encoded in the trnK tRNA gene intron. Probably assists in splicing its own and other chloroplast group II introns. This is Maturase K from Phoenix dactylifera (Date palm).